The sequence spans 328 residues: Tetraacyldisaccharide 4'-kinase (328 aa).

59–66 (TAGGNGKT) serves as a coordination point for ATP.

Belongs to the LpxK family.

The enzyme catalyses a lipid A disaccharide + ATP = a lipid IVA + ADP + H(+). Its pathway is glycolipid biosynthesis; lipid IV(A) biosynthesis; lipid IV(A) from (3R)-3-hydroxytetradecanoyl-[acyl-carrier-protein] and UDP-N-acetyl-alpha-D-glucosamine: step 6/6. In terms of biological role, transfers the gamma-phosphate of ATP to the 4'-position of a tetraacyldisaccharide 1-phosphate intermediate (termed DS-1-P) to form tetraacyldisaccharide 1,4'-bis-phosphate (lipid IVA). This is Tetraacyldisaccharide 4'-kinase from Aliivibrio fischeri (strain MJ11) (Vibrio fischeri).